A 364-amino-acid polypeptide reads, in one-letter code: MIRAFDAVSLPLLRWLDPEDAHRLAIQGLKLWPPVKPRPDDSKLAVRAFGLNFSNPVGIAAGFDKNAEAPDALLRLGFGFVEVGTVTPKPQAGNPRPRLFRLERDEAVINRMGFNNEGAEVVLRRLAARAQYGGIVGVNVGANKDSDDRVADYVKLIETFAPLASYFTVNVSSPNTPGLRNLQQAAALDDLLARVIDARERVRAAAGDTPVLLKIAPDLSLGELDDVVHIARSRRVDGMIVANTTLSRSPTLRERTKMNEQGGLSGRPLFRLSTRMVAETFVRAEGAFPLIGVGGIDSGGAALTKIRAGATLVQLYSALVYKGLGLVESIKADLASTLLRTDRDSLAEIVGADAPMITAEEWPV.

FMN is bound by residues 61–65 (AGFDK) and threonine 85. Lysine 65 provides a ligand contact to substrate. 110 to 114 (NRMGF) is a substrate binding site. Positions 139 and 170 each coordinate FMN. Asparagine 170 serves as a coordination point for substrate. The active-site Nucleophile is serine 173. Asparagine 175 contacts substrate. FMN contacts are provided by lysine 214 and alanine 242. 243 to 244 (NT) lines the substrate pocket. Residues glycine 266, glycine 295, and 316–317 (YS) each bind FMN.

This sequence belongs to the dihydroorotate dehydrogenase family. Type 2 subfamily. Monomer. It depends on FMN as a cofactor.

It is found in the cell membrane. The enzyme catalyses (S)-dihydroorotate + a quinone = orotate + a quinol. It functions in the pathway pyrimidine metabolism; UMP biosynthesis via de novo pathway; orotate from (S)-dihydroorotate (quinone route): step 1/1. Catalyzes the conversion of dihydroorotate to orotate with quinone as electron acceptor. This Rhodopseudomonas palustris (strain ATCC BAA-98 / CGA009) protein is Dihydroorotate dehydrogenase (quinone).